We begin with the raw amino-acid sequence, 236 residues long: Glucosamine-6-phosphate deaminase (236 aa).

Aspartate 62 serves as the catalytic Proton acceptor; for enolization step. Residue asparagine 128 is the For ring-opening step of the active site. The active-site Proton acceptor; for ring-opening step is histidine 130. The active-site For ring-opening step is glutamate 135.

It belongs to the glucosamine/galactosamine-6-phosphate isomerase family. NagB subfamily.

It carries out the reaction alpha-D-glucosamine 6-phosphate + H2O = beta-D-fructose 6-phosphate + NH4(+). It participates in amino-sugar metabolism; N-acetylneuraminate degradation; D-fructose 6-phosphate from N-acetylneuraminate: step 5/5. Functionally, catalyzes the reversible isomerization-deamination of glucosamine 6-phosphate (GlcN6P) to form fructose 6-phosphate (Fru6P) and ammonium ion. The sequence is that of Glucosamine-6-phosphate deaminase from Lacticaseibacillus paracasei (strain ATCC 334 / BCRC 17002 / CCUG 31169 / CIP 107868 / KCTC 3260 / NRRL B-441) (Lactobacillus paracasei).